The sequence spans 333 residues: Ribonucleoside-diphosphate reductase small chain B (333 aa).

The Fe cation site is built by Asp76, Glu107, and His110. Residue Tyr114 is part of the active site. Glu169, Glu203, and His206 together coordinate Fe cation.

Belongs to the ribonucleoside diphosphate reductase small chain family. As to quaternary structure, heterodimer of a large and a small chain. Requires Fe cation as cofactor. Expressed in roots, rosette leaves, stems and flowers.

It localises to the cytoplasm. The enzyme catalyses a 2'-deoxyribonucleoside 5'-diphosphate + [thioredoxin]-disulfide + H2O = a ribonucleoside 5'-diphosphate + [thioredoxin]-dithiol. Provides the precursors necessary for DNA synthesis. Catalyzes the biosynthesis of deoxyribonucleotides from the corresponding ribonucleotides. The chain is Ribonucleoside-diphosphate reductase small chain B (RNR2B) from Arabidopsis thaliana (Mouse-ear cress).